Here is a 593-residue protein sequence, read N- to C-terminus: ABC transporter F family member 2 (593 aa).

The segment covering 1–10 (MAKKGGKNNK) has biased composition (basic residues). Residues 1–25 (MAKKGGKNNKSKKEVTPPTSDVEDE) form a disordered region. ABC transporter domains follow at residues 53–294 (VKIE…VNQM) and 364–583 (MHFD…RDLT). ATP-binding positions include 85 to 92 (GQNGCGKS) and 399 to 406 (GPNGAGKS).

It belongs to the ABC transporter superfamily. ABCF family. EF3 subfamily.

This chain is ABC transporter F family member 2 (abcF2), found in Dictyostelium discoideum (Social amoeba).